The chain runs to 229 residues: MFDIGFSELLLFGVIALIVLGPEKLPQAARTAGQWYAKIRRTVSTLQSEIEAELDLAETRQLMQKELAKIRQTEAEMRREMAEMRGSIKEFEHSQSQNLKTSDKAASPANQANNDSAIQNNNEPATFSYAYGQSNNLTDSQQLSNQDITSINSDAVTDSSTIKQPAQPLITKPWENMWFRLGAYDKARRLPAVPYLPNYKADILLNSSFDSSFDSPLNTQASVNQQESE.

The helical transmembrane segment at 1–21 (MFDIGFSELLLFGVIALIVLG) threads the bilayer. The disordered stretch occupies residues 90 to 131 (EFEHSQSQNLKTSDKAASPANQANNDSAIQNNNEPATFSYAY). Residues 108-131 (PANQANNDSAIQNNNEPATFSYAY) are compositionally biased toward polar residues.

The protein belongs to the TatB family. As to quaternary structure, the Tat system comprises two distinct complexes: a TatABC complex, containing multiple copies of TatA, TatB and TatC subunits, and a separate TatA complex, containing only TatA subunits. Substrates initially bind to the TatABC complex, which probably triggers association of the separate TatA complex to form the active translocon.

It localises to the cell inner membrane. Part of the twin-arginine translocation (Tat) system that transports large folded proteins containing a characteristic twin-arginine motif in their signal peptide across membranes. Together with TatC, TatB is part of a receptor directly interacting with Tat signal peptides. TatB may form an oligomeric binding site that transiently accommodates folded Tat precursor proteins before their translocation. The sequence is that of Sec-independent protein translocase protein TatB from Psychrobacter arcticus (strain DSM 17307 / VKM B-2377 / 273-4).